Here is a 256-residue protein sequence, read N- to C-terminus: Thiazole synthase (256 aa).

Catalysis depends on K95, which acts as the Schiff-base intermediate with DXP. Residues G156, 182-183 (AG), and 204-205 (NT) each bind 1-deoxy-D-xylulose 5-phosphate.

This sequence belongs to the ThiG family. In terms of assembly, homotetramer. Forms heterodimers with either ThiH or ThiS.

The protein resides in the cytoplasm. It carries out the reaction [ThiS sulfur-carrier protein]-C-terminal-Gly-aminoethanethioate + 2-iminoacetate + 1-deoxy-D-xylulose 5-phosphate = [ThiS sulfur-carrier protein]-C-terminal Gly-Gly + 2-[(2R,5Z)-2-carboxy-4-methylthiazol-5(2H)-ylidene]ethyl phosphate + 2 H2O + H(+). Its pathway is cofactor biosynthesis; thiamine diphosphate biosynthesis. In terms of biological role, catalyzes the rearrangement of 1-deoxy-D-xylulose 5-phosphate (DXP) to produce the thiazole phosphate moiety of thiamine. Sulfur is provided by the thiocarboxylate moiety of the carrier protein ThiS. In vitro, sulfur can be provided by H(2)S. The chain is Thiazole synthase from Escherichia coli O7:K1 (strain IAI39 / ExPEC).